Reading from the N-terminus, the 302-residue chain is Zinc finger protein-like 1 homolog (302 aa).

The segment at 1-43 adopts a B box-type; degenerate zinc-finger fold; the sequence is MGLCKCPKRLVTNQFCFEHRVNVCEHCMVQSHPKCIVQSYLQW. The RING-type; atypical zinc-finger motif lies at 53–101; it reads CNLCGTSLEQGECVRLVCYHVFHWDCLNARQAALPANTAPRGHQCPGCS. Residues 168–233 are disordered; it reads IHSGGERERG…RDDNKYQRRT (66 aa). The span at 198-208 shows a compositional bias: polar residues; that stretch reads PPSSGDFNASS. Ser217 carries the phosphoserine modification. Residues 258–278 form a helical membrane-spanning segment; that stretch reads WFLVLSGILAFVMFIYLLAWM.

Belongs to the ZFPL1 family.

The protein localises to the membrane. In Drosophila pseudoobscura pseudoobscura (Fruit fly), this protein is Zinc finger protein-like 1 homolog.